A 1353-amino-acid polypeptide reads, in one-letter code: DNA-directed RNA polymerase subunit beta' (1353 aa).

The interval 1–117 (MSDNRLFTSV…AFQKLNDLFK (117 aa)) is unknown. The segment at 118–1353 (LYNHFPSISS…SELTKKTNQN (1236 aa)) is DNA-directed RNA polymerase subunit beta'. Zn(2+) is bound by residues Cys189, Cys191, Cys203, and Cys206. Residues Asp578, Asp580, and Asp582 each coordinate Mg(2+).

Belongs to the RNA polymerase beta' chain family. As to quaternary structure, the RNAP catalytic core consists of 2 alpha, 1 beta, 1 beta' and 1 omega subunit. When a sigma factor is associated with the core the holoenzyme is formed, which can initiate transcription. The cofactor is Mg(2+). It depends on Zn(2+) as a cofactor.

The enzyme catalyses RNA(n) + a ribonucleoside 5'-triphosphate = RNA(n+1) + diphosphate. In terms of biological role, DNA-dependent RNA polymerase catalyzes the transcription of DNA into RNA using the four ribonucleoside triphosphates as substrates. The sequence is that of DNA-directed RNA polymerase subunit beta' from Aster yellows witches'-broom phytoplasma (strain AYWB).